The chain runs to 462 residues: B3 domain-containing protein REM8 (462 aa).

DNA-binding regions (TF-B3) lie at residues 11 to 103 (NKHF…LGPS), 148 to 243 (CFSQ…LCSR), and 249 to 346 (FVKL…FSKI). The segment at 351–419 (FEAEDRRHKR…NLQKTQACSV (69 aa)) is disordered. Positions 369–397 (ETDKGEPSRATKMGPELEKREKTAEKGEP) are enriched in basic and acidic residues. Residues 399–418 (RASNKSSGKQGNLQKTQACS) are compositionally biased toward polar residues.

The protein localises to the nucleus. This chain is B3 domain-containing protein REM8 (REM8), found in Arabidopsis thaliana (Mouse-ear cress).